The following is a 416-amino-acid chain: Probable glucan 1,3-beta-glucosidase A (416 aa).

The first 22 residues, 1-22 (MFVESAKKALLALSLLAASAQA), serve as a signal peptide directing secretion. Asparagine 183 carries an N-linked (GlcNAc...) asparagine glycan. The Proton donor role is filled by glutamate 210. 2 disulfide bridges follow: cysteine 290/cysteine 415 and cysteine 316/cysteine 342. The active-site Nucleophile is the glutamate 308.

It belongs to the glycosyl hydrolase 5 (cellulase A) family. In terms of assembly, monomer. Mn(2+) is required as a cofactor.

It is found in the secreted. The catalysed reaction is Successive hydrolysis of beta-D-glucose units from the non-reducing ends of (1-&gt;3)-beta-D-glucans, releasing alpha-glucose.. In terms of biological role, beta-glucanases participate in the metabolism of beta-glucan, the main structural component of the cell wall. It could also function biosynthetically as a transglycosylase. The sequence is that of Probable glucan 1,3-beta-glucosidase A (exgA) from Aspergillus niger (strain ATCC MYA-4892 / CBS 513.88 / FGSC A1513).